We begin with the raw amino-acid sequence, 281 residues long: Short neuropeptide F (281 aa).

The N-terminal stretch at Met-1 to Ala-30 is a signal peptide. Positions Glu-31–Glu-64 are excised as a propeptide. 2 positions are modified to phenylalanine amide: Phe-77 and Phe-111. A propeptide spanning residues Asp-115–Val-165 is cleaved from the precursor. The interval Asn-137 to Asp-156 is disordered. Trp-173 carries the post-translational modification Tryptophan amide. Positions Ser-176–Val-246 are excised as a propeptide. The disordered stretch occupies residues Ala-226 to Asn-281. Tryptophan amide is present on Trp-254. Residues Ser-257–Asn-281 constitute a propeptide that is removed on maturation. The span at Glu-271 to Asn-281 shows a compositional bias: polar residues.

Belongs to the NPY family. In terms of tissue distribution, stage 17 embryos show expression in the two brain hemispheres (neural cells located in the dorsal posterior region), the connected ventral ganglion (pairs of neural cells along the ventral midline) and the peripheral nervous system (expressed in the antennal-maxillary sensory cells). In the brain hemispheres of the feeding third instar larva, expression in neural cells is located in the dorsal-anterior region of the protocerebrum. In the larval ventral ganglion, expression is seen in the neural cells located in the subesophagial region, along the ventral midline and in thoracic and abdominal segments. In the adult brain, expression is seen in the medulla and the mushroom body calyx (at protein level).

It localises to the secreted. Functionally, plays a role in controlling food intake and regulating body size. The protein is Short neuropeptide F (sNPF) of Drosophila melanogaster (Fruit fly).